The primary structure comprises 301 residues: Thyrotroph embryonic factor (301 aa).

Disordered regions lie at residues Met-1–Met-70 and Glu-130–Cys-174. Ser-30 carries the post-translational modification Phosphoserine. Residues Lys-39–Leu-59 are compositionally biased toward basic and acidic residues. Low complexity predominate over residues Ser-131–Ser-158. The bZIP domain occupies Asp-231–Tyr-294. Positions Lys-233–Arg-253 are basic motif. Residues Leu-254 to Ile-261 form a leucine-zipper region.

It belongs to the bZIP family. PAR subfamily. Binds DNA as a homodimer or a heterodimer. Can form a heterodimer with DBP. Isoform Alpha and isoform Beta are expressed at high levels in lung, bladder, kidney, gut and brain.

It localises to the nucleus. Functionally, transcription factor that binds to and transactivates the TSHB promoter. Binds to a minimal DNA-binding sequence 5'-[TC][AG][AG]TTA[TC][AG]-3'. Also activates the telokin promoter in smooth muscle-specific and calcium-dependent manner. This Mus musculus (Mouse) protein is Thyrotroph embryonic factor (Tef).